A 339-amino-acid chain; its full sequence is DNA-directed RNA polymerase subunit alpha (339 aa).

Positions 1–233 are alpha N-terminal domain (alpha-NTD); that stretch reads MVREKVRIST…DLFIPFLHAE (233 aa). An alpha C-terminal domain (alpha-CTD) region spans residues 267–339; that stretch reads IALKSIFIDQ…FTINLPKNKF (73 aa).

Belongs to the RNA polymerase alpha chain family. As to quaternary structure, in plastids the minimal PEP RNA polymerase catalytic core is composed of four subunits: alpha, beta, beta', and beta''. When a (nuclear-encoded) sigma factor is associated with the core the holoenzyme is formed, which can initiate transcription.

The protein resides in the plastid. It localises to the chloroplast. It carries out the reaction RNA(n) + a ribonucleoside 5'-triphosphate = RNA(n+1) + diphosphate. Its function is as follows. DNA-dependent RNA polymerase catalyzes the transcription of DNA into RNA using the four ribonucleoside triphosphates as substrates. In Populus alba (White poplar), this protein is DNA-directed RNA polymerase subunit alpha.